The sequence spans 239 residues: 1-(5-phosphoribosyl)-5-[(5-phosphoribosylamino)methylideneamino] imidazole-4-carboxamide isomerase (239 aa).

Asp9 acts as the Proton acceptor in catalysis. Residue Asp131 is the Proton donor of the active site.

It belongs to the HisA/HisF family.

The protein localises to the cytoplasm. It catalyses the reaction 1-(5-phospho-beta-D-ribosyl)-5-[(5-phospho-beta-D-ribosylamino)methylideneamino]imidazole-4-carboxamide = 5-[(5-phospho-1-deoxy-D-ribulos-1-ylimino)methylamino]-1-(5-phospho-beta-D-ribosyl)imidazole-4-carboxamide. Its pathway is amino-acid biosynthesis; L-histidine biosynthesis; L-histidine from 5-phospho-alpha-D-ribose 1-diphosphate: step 4/9. The polypeptide is 1-(5-phosphoribosyl)-5-[(5-phosphoribosylamino)methylideneamino] imidazole-4-carboxamide isomerase (Phocaeicola vulgatus (strain ATCC 8482 / DSM 1447 / JCM 5826 / CCUG 4940 / NBRC 14291 / NCTC 11154) (Bacteroides vulgatus)).